A 140-amino-acid chain; its full sequence is Lymphocyte antigen 6H (140 aa).

The first 25 residues, 1–25, serve as a signal peptide directing secretion; that stretch reads MLPAAMKGLGLVLLAALLCSSPAHG. Positions 26–91 constitute a UPAR/Ly6 domain; it reads LWCQDCTLTT…RHFFSDYLMG (66 aa). Intrachain disulfides connect cysteine 28–cysteine 52, cysteine 31–cysteine 40, cysteine 45–cysteine 73, cysteine 77–cysteine 104, and cysteine 105–cysteine 110. The N-linked (GlcNAc...) asparagine glycan is linked to asparagine 36.

The protein resides in the cell membrane. This Bos taurus (Bovine) protein is Lymphocyte antigen 6H (LY6H).